The following is a 205-amino-acid chain: Probable peptidyl-tRNA hydrolase 2 (205 aa).

Residues 40–49 (YSSKNANKAS) are compositionally biased toward polar residues. The tract at residues 40 to 68 (YSSKNANKASNPEKESPVSVSNDEDSESE) is disordered. Residues Ser65 and Ser79 each carry the phosphoserine modification.

It belongs to the PTH2 family.

The enzyme catalyses an N-acyl-L-alpha-aminoacyl-tRNA + H2O = an N-acyl-L-amino acid + a tRNA + H(+). The natural substrate for this enzyme may be peptidyl-tRNAs which drop off the ribosome during protein synthesis. This chain is Probable peptidyl-tRNA hydrolase 2, found in Schizosaccharomyces pombe (strain 972 / ATCC 24843) (Fission yeast).